A 200-amino-acid polypeptide reads, in one-letter code: NADH-quinone oxidoreductase subunit C (200 aa).

The protein belongs to the complex I 30 kDa subunit family. In terms of assembly, NDH-1 is composed of 14 different subunits. Subunits NuoB, C, D, E, F, and G constitute the peripheral sector of the complex.

Its subcellular location is the cell inner membrane. The catalysed reaction is a quinone + NADH + 5 H(+)(in) = a quinol + NAD(+) + 4 H(+)(out). Its function is as follows. NDH-1 shuttles electrons from NADH, via FMN and iron-sulfur (Fe-S) centers, to quinones in the respiratory chain. The immediate electron acceptor for the enzyme in this species is believed to be ubiquinone. Couples the redox reaction to proton translocation (for every two electrons transferred, four hydrogen ions are translocated across the cytoplasmic membrane), and thus conserves the redox energy in a proton gradient. The sequence is that of NADH-quinone oxidoreductase subunit C from Rhizobium leguminosarum bv. trifolii (strain WSM2304).